Reading from the N-terminus, the 443-residue chain is dTDP-4-dehydro-6-deoxy-alpha-D-glucopyranose 2,3-dehydratase (443 aa).

DTDP-4-dehydro-6-deoxy-alpha-D-glucose contacts are provided by residues tryptophan 35, 118–122 (TFSNY), serine 157, tryptophan 260, arginine 325, 341–343 (QCN), 346–347 (NL), and 377–380 (EGGR).

The protein belongs to the hexose 2,3-dehydratase family. As to quaternary structure, homodimer.

It carries out the reaction dTDP-4-dehydro-6-deoxy-alpha-D-glucose = dTDP-3,4-didehydro-2,6-dideoxy-alpha-D-glucose + H2O. The protein operates within antibiotic biosynthesis; granaticin biosynthesis. In terms of biological role, involved in the biosynthesis of the 2,6-deoxysugar, dTDP-L-rhodinose, attached to the benzoisochromane quinone chromophore to produce the aglycone antibiotics granaticin and granaticin B. Catalyzes the removal of the hydroxyl group at position C-2 of the hexose ring of dTDP-4-dehydro-6-deoxy-alpha-D-glucopyranose, and the oxidation of the hydroxyl group at position C-3 to form a carbonyl functionality. The product of the reaction, dTDP-2,6-dideoxy-D-glycero-hex-2-enos-4-ulose, is a highly unstable diketosugar, which spontaneously forms dTDP-3,4-didehydro-2,6-dideoxy-alpha-D-glucose. The sequence is that of dTDP-4-dehydro-6-deoxy-alpha-D-glucopyranose 2,3-dehydratase from Streptomyces violaceoruber.